The chain runs to 285 residues: tRNA pseudouridine synthase B (285 aa).

Aspartate 38 acts as the Nucleophile in catalysis.

It belongs to the pseudouridine synthase TruB family. Type 1 subfamily.

It catalyses the reaction uridine(55) in tRNA = pseudouridine(55) in tRNA. In terms of biological role, responsible for synthesis of pseudouridine from uracil-55 in the psi GC loop of transfer RNAs. In Geobacillus kaustophilus (strain HTA426), this protein is tRNA pseudouridine synthase B.